An 83-amino-acid polypeptide reads, in one-letter code: RNA-binding protein Hfq (83 aa).

The 60-residue stretch at 10 to 69 (DPFLNALRREHVPVSIYLVNGIKLQGQIESFDQYVVLLRNTVTQMVYKHAISTIVPGRAV) folds into the Sm domain.

Belongs to the Hfq family. As to quaternary structure, homohexamer.

Its function is as follows. RNA chaperone that binds small regulatory RNA (sRNAs) and mRNAs to facilitate mRNA translational regulation in response to envelope stress, environmental stress and changes in metabolite concentrations. Also binds with high specificity to tRNAs. The chain is RNA-binding protein Hfq from Acidovorax ebreus (strain TPSY) (Diaphorobacter sp. (strain TPSY)).